We begin with the raw amino-acid sequence, 222 residues long: ATP synthase F(0) complex subunit a (222 aa).

Transmembrane regions (helical) follow at residues 8-28 (FFYV…ILLP), 64-84 (WSLM…LGLL), 93-113 (QLTV…VPGF), 127-147 (QGTP…SLLI), 160-180 (ITAG…LSSI), and 197-219 (ILEL…LYLH).

The protein belongs to the ATPase A chain family. In terms of assembly, component of the ATP synthase complex composed at least of ATP5F1A/subunit alpha, ATP5F1B/subunit beta, ATP5MC1/subunit c (homooctomer), MT-ATP6/subunit a, MT-ATP8/subunit 8, ATP5ME/subunit e, ATP5MF/subunit f, ATP5MG/subunit g, ATP5MK/subunit k, ATP5MJ/subunit j, ATP5F1C/subunit gamma, ATP5F1D/subunit delta, ATP5F1E/subunit epsilon, ATP5PF/subunit F6, ATP5PB/subunit b, ATP5PD/subunit d, ATP5PO/subunit OSCP. ATP synthase complex consists of a soluble F(1) head domain (subunits alpha(3) and beta(3)) - the catalytic core - and a membrane F(0) domain - the membrane proton channel (subunits c, a, 8, e, f, g, k and j). These two domains are linked by a central stalk (subunits gamma, delta, and epsilon) rotating inside the F1 region and a stationary peripheral stalk (subunits F6, b, d, and OSCP). Interacts with DNAJC30; interaction is direct.

It is found in the mitochondrion inner membrane. The enzyme catalyses H(+)(in) = H(+)(out). In terms of biological role, subunit a, of the mitochondrial membrane ATP synthase complex (F(1)F(0) ATP synthase or Complex V) that produces ATP from ADP in the presence of a proton gradient across the membrane which is generated by electron transport complexes of the respiratory chain. ATP synthase complex consist of a soluble F(1) head domain - the catalytic core - and a membrane F(1) domain - the membrane proton channel. These two domains are linked by a central stalk rotating inside the F(1) region and a stationary peripheral stalk. During catalysis, ATP synthesis in the catalytic domain of F(1) is coupled via a rotary mechanism of the central stalk subunits to proton translocation. With the subunit c (ATP5MC1), forms the proton-conducting channel in the F(0) domain, that contains two crucial half-channels (inlet and outlet) that facilitate proton movement from the mitochondrial intermembrane space (IMS) into the matrix. Protons are taken up via the inlet half-channel and released through the outlet half-channel, following a Grotthuss mechanism. In Loxodonta africana (African elephant), this protein is ATP synthase F(0) complex subunit a.